The primary structure comprises 392 residues: Aminomethyltransferase, mitochondrial (392 aa).

The transit peptide at 1–16 (MLRAGCRAALARRHLS) directs the protein to the mitochondrion. Substrate is bound by residues E221, R250, and Y388.

The protein belongs to the GcvT family. The glycine cleavage system is composed of four proteins: P, T, L and H.

The protein localises to the mitochondrion. The enzyme catalyses N(6)-[(R)-S(8)-aminomethyldihydrolipoyl]-L-lysyl-[protein] + (6S)-5,6,7,8-tetrahydrofolate = N(6)-[(R)-dihydrolipoyl]-L-lysyl-[protein] + (6R)-5,10-methylene-5,6,7,8-tetrahydrofolate + NH4(+). In terms of biological role, the glycine cleavage system catalyzes the degradation of glycine. The protein is Aminomethyltransferase, mitochondrial of Gallus gallus (Chicken).